The chain runs to 292 residues: Phosphatidylglycerol--prolipoprotein diacylglyceryl transferase (292 aa).

The next 3 membrane-spanning stretches (helical) occupy residues 18–38 (LFGVTFALRWYALAYIAGLLI), 67–87 (LLTWVILGVILGGRLGFVLFY), and 105–125 (GGMSFHGGFLGVMTALVAFCL). Arg150 serves as a coordination point for a 1,2-diacyl-sn-glycero-3-phospho-(1'-sn-glycerol). Transmembrane regions (helical) follow at residues 193-213 (QIYEAGLEGILLFTVLSLLVW), 222-242 (GSVSGMFLAGYGATRFLVEFV), and 266-286 (GLTMGQILSLPMILLGLYLIL).

It belongs to the Lgt family.

Its subcellular location is the cell inner membrane. It catalyses the reaction L-cysteinyl-[prolipoprotein] + a 1,2-diacyl-sn-glycero-3-phospho-(1'-sn-glycerol) = an S-1,2-diacyl-sn-glyceryl-L-cysteinyl-[prolipoprotein] + sn-glycerol 1-phosphate + H(+). It functions in the pathway protein modification; lipoprotein biosynthesis (diacylglyceryl transfer). Functionally, catalyzes the transfer of the diacylglyceryl group from phosphatidylglycerol to the sulfhydryl group of the N-terminal cysteine of a prolipoprotein, the first step in the formation of mature lipoproteins. This is Phosphatidylglycerol--prolipoprotein diacylglyceryl transferase from Cereibacter sphaeroides (strain ATCC 17023 / DSM 158 / JCM 6121 / CCUG 31486 / LMG 2827 / NBRC 12203 / NCIMB 8253 / ATH 2.4.1.) (Rhodobacter sphaeroides).